The sequence spans 135 residues: MINTKPPEIYALGQHISMSADKARRIIDRIRGRSYEETLLILELMPYRAAYPIFKLVYSAASNASYTLASNEANLVIIKAEVNEGPAIKKLKPRARGRCYPIKRPTCHITIVLKDISFYDSDSESVELNLLKKAR.

It belongs to the universal ribosomal protein uL22 family. Part of the 50S ribosomal subunit.

It localises to the plastid. In terms of biological role, this protein binds specifically to 23S rRNA. The globular domain of the protein is located near the polypeptide exit tunnel on the outside of the subunit, while an extended beta-hairpin is found that lines the wall of the exit tunnel in the center of the 70S ribosome. The protein is Large ribosomal subunit protein uL22c (rpl22) of Cuscuta exaltata (Tall dodder).